A 367-amino-acid chain; its full sequence is Anhydro-N-acetylmuramic acid kinase (367 aa).

ATP is bound at residue 11-18 (GTSLDGVD).

It belongs to the anhydro-N-acetylmuramic acid kinase family.

It carries out the reaction 1,6-anhydro-N-acetyl-beta-muramate + ATP + H2O = N-acetyl-D-muramate 6-phosphate + ADP + H(+). The protein operates within amino-sugar metabolism; 1,6-anhydro-N-acetylmuramate degradation. Its pathway is cell wall biogenesis; peptidoglycan recycling. Functionally, catalyzes the specific phosphorylation of 1,6-anhydro-N-acetylmuramic acid (anhMurNAc) with the simultaneous cleavage of the 1,6-anhydro ring, generating MurNAc-6-P. Is required for the utilization of anhMurNAc either imported from the medium or derived from its own cell wall murein, and thus plays a role in cell wall recycling. The sequence is that of Anhydro-N-acetylmuramic acid kinase from Chromobacterium violaceum (strain ATCC 12472 / DSM 30191 / JCM 1249 / CCUG 213 / NBRC 12614 / NCIMB 9131 / NCTC 9757 / MK).